The chain runs to 311 residues: Olfactory receptor 10G4 (311 aa).

Over 1 to 23 the chain is Extracellular; the sequence is MSNASLVTAFILTGLPHAPGLDA. N-linked (GlcNAc...) asparagine glycosylation is present at N3. A helical transmembrane segment spans residues 24–44; it reads LLFGIFLVVYVLTVLGNLLIL. The Cytoplasmic portion of the chain corresponds to 45-52; that stretch reads LVIRVDSH. A helical membrane pass occupies residues 53 to 73; that stretch reads LHTPMYYFLTNLSFIDMWFST. At 74–98 the chain is on the extracellular side; sequence VTVPKMLMTLVSPSGRAISFHSCVA. Cysteines 96 and 188 form a disulfide. A helical transmembrane segment spans residues 99-119; the sequence is QLYFFHFLGSTECFLYTVMSY. Residues 120-138 are Cytoplasmic-facing; sequence DRYLAISYPLRYTSMMSGS. Residues 139-159 form a helical membrane-spanning segment; the sequence is RCALLATGTWLSGSLHSAVQT. Residues 160–196 are Extracellular-facing; the sequence is ILTFHLPYCGPNQIQHYFCDAPPILKLACADTSANVM. A helical membrane pass occupies residues 197–216; the sequence is VIFVDIGIVASGCFVLIVLS. Residues 217–236 lie on the Cytoplasmic side of the membrane; sequence YVSIVCSILRIRTSDGRRRA. A helical transmembrane segment spans residues 237-257; it reads FQTCASHCIVVLCFFVPCVVI. Over 258 to 268 the chain is Extracellular; sequence YLRPGSMDAMD. Residues 269-289 form a helical membrane-spanning segment; that stretch reads GVVAIFYTVLTPLLNPVVYTL. Topologically, residues 290 to 311 are cytoplasmic; it reads RNKEVKKAVLKLRDKVAHPQRK.

It belongs to the G-protein coupled receptor 1 family.

It localises to the cell membrane. Odorant receptor. The sequence is that of Olfactory receptor 10G4 (OR10G4) from Homo sapiens (Human).